Reading from the N-terminus, the 400-residue chain is Phosphoglycerate kinase (400 aa).

Residues 23–25 (DLN), arginine 38, 61–64 (HFGR), arginine 120, and arginine 153 each bind substrate. Residues lysine 203, glutamate 325, and 355 to 358 (GGDT) each bind ATP.

This sequence belongs to the phosphoglycerate kinase family. In terms of assembly, monomer.

The protein localises to the cytoplasm. It carries out the reaction (2R)-3-phosphoglycerate + ATP = (2R)-3-phospho-glyceroyl phosphate + ADP. It participates in carbohydrate degradation; glycolysis; pyruvate from D-glyceraldehyde 3-phosphate: step 2/5. In Agrobacterium fabrum (strain C58 / ATCC 33970) (Agrobacterium tumefaciens (strain C58)), this protein is Phosphoglycerate kinase.